Reading from the N-terminus, the 252-residue chain is Floral homeotic protein AGAMOUS (252 aa).

The disordered stretch occupies residues 1 to 20 (MAYQSELGGDSSPLRKSGRG). Residues 19-73 (RGKIEIKRIENTTNRQVTFCKRRNGLLKKAYELSVLCDAEVALIVFSSRGRLYEY) form the MADS-box domain. The stretch at 99–166 (AEINAQYYQQ…KKNELLFSEI (68 aa)) forms a coiled coil. The 91-residue stretch at 103–193 (AQYYQQESAK…RAKIAENERN (91 aa)) folds into the K-box domain.

In terms of assembly, homodimer, capable of binding to CArG-box sequences. Forms a heterodimer via the K-box domain with either SEPALATTA1/AGL2, SEPALATTA2/AGL4, SEPALLATA3/AGL9 or AGL6. Heterodimerization also seen with some other Agamous-like MADS-box proteins. Interacts with AGL15 and AGL16. Component of a complex made of FLOR1, VSP1 and AGAMOUS (AG). Binds directly with FLR1. Detected early in the floral meristem but mostly expressed in stamen and carpel primordia.

Its subcellular location is the nucleus. In terms of biological role, probable transcription factor involved in the control of organ identity during the early development of flowers. Is required for normal development of stamens and carpels in the wild-type flower. Plays a role in maintaining the determinacy of the floral meristem. Acts as C class cadastral protein by repressing the A class floral homeotic genes like APETALA1. Forms a heterodimer via the K-box domain with either SEPALATTA1/AGL2, SEPALATTA2/AGL4, SEPALLATA3/AGL9 or AGL6 that could be involved in genes regulation during floral meristem development. Controls AHL21/GIK, a multifunctional chromatin modifier in reproductive organ patterning and differentiation. Induces microsporogenesis through the activation of SPL/NZZ. The protein is Floral homeotic protein AGAMOUS (AG) of Arabidopsis thaliana (Mouse-ear cress).